A 393-amino-acid chain; its full sequence is Rhizopuspepsin (393 aa).

A signal peptide spans 1–21 (MKFTLISSCIAIAALAVAVDA). A propeptide spans 22–68 (APGEKKISIPLAKNPNYKPSAKNAIQKAIAKYNKHKINTSTGGIVPD) (activation peptide). Residues 85-389 (YYGQVTIGTP…NQGVPEVQIA (305 aa)) enclose the Peptidase A1 domain. Aspartate 103 is a catalytic residue. Cysteine 116 and cysteine 119 form a disulfide bridge. Aspartate 286 is an active-site residue. A disulfide bond links cysteine 320 and cysteine 353.

The protein belongs to the peptidase A1 family.

The enzyme catalyses Hydrolysis of proteins with broad specificity similar to that of pepsin A, preferring hydrophobic residues at P1 and P1'. Clots milk and activates trypsinogen. Does not cleave 4-Gln-|-His-5, but does cleave 10-His-|-Leu-11 and 12-Val-|-Glu-13 in B chain of insulin.. This chain is Rhizopuspepsin, found in Rhizopus chinensis (Bread mold).